The primary structure comprises 138 residues: Calmodulin-beta (138 aa).

EF-hand domains lie at 1-32 (EFKE…LGQN), 33-68 (PTEA…KMKE), 70-105 (DSEE…LGEK), and 106-138 (LTDE…MTSK). 19 residues coordinate Ca(2+): Asp-10, Asp-12, Asp-14, Thr-16, Glu-21, Asp-46, Asp-48, Asn-50, Thr-52, Glu-57, Asp-83, Asp-85, Asn-87, Glu-94, Asp-119, Asp-121, Asp-123, Gln-125, and Glu-130.

This sequence belongs to the calmodulin family.

In terms of biological role, calmodulin mediates the control of a large number of enzymes, ion channels and other proteins by Ca(2+). Among the enzymes to be stimulated by the calmodulin-Ca(2+) complex are a number of protein kinases and phosphatases. The protein is Calmodulin-beta of Arbacia punctulata (Punctuate sea urchin).